The following is a 307-amino-acid chain: Synaptophysin (307 aa).

At 1 to 19 (MDVVNQLVAGGQFRVVKEP) the chain is on the cytoplasmic side. One can recognise an MARVEL domain in the interval 15–222 (VVKEPLGFVK…NLWFVFKETG (208 aa)). The chain crosses the membrane as a helical span at residues 20–43 (LGFVKVLQWVFAIFAFATCGSYTG). Residues 44–101 (ELRLSVECANKTESALNIEVEFEYPFRLHQVYFDAPSCVKGGTTKIFLVGDYSSSAEF) are Vesicular-facing. Residue asparagine 53 is glycosylated (N-linked (GlcNAc...) asparagine). Position 75 is a phosphotyrosine (tyrosine 75). The chain crosses the membrane as a helical span at residues 102–125 (FVTVAVFAFLYSMGALATYIFLQN). Topologically, residues 126-132 (KYRENNK) are cytoplasmic. Residues 133–156 (GPMMDFLATAVFAFMWLVSSSAWA) traverse the membrane as a helical segment. The Vesicular portion of the chain corresponds to 157 to 194 (KGLSDVKMATDPENIIKEMPMCRQTGNTCKELRDPVTS). Residues 195–218 (GLNTSVVFGFLNLVLWVGNLWFVF) traverse the membrane as a helical segment. Residues 219–307 (KETGWAAPFM…GAPTSFSNQM (89 aa)) lie on the Cytoplasmic side of the membrane. A Phosphothreonine modification is found at threonine 221. Positions 233-307 (GAPEKQPAPG…GAPTSFSNQM (75 aa)) are disordered. The segment covering 248-258 (AGYGQGPGGYG) has biased composition (gly residues). The tract at residues 249 to 298 (GYGQGPGGYGPQDSYGPQGGYQPDYGQPASGGGGYGPQGDYGQQGYGQQG) is repeats, Gly-rich. Residues 259–276 (PQDSYGPQGGYQPDYGQP) show a composition bias toward low complexity. Tyrosine 273 and tyrosine 289 each carry phosphotyrosine. The span at 277–296 (ASGGGGYGPQGDYGQQGYGQ) shows a compositional bias: gly residues.

It belongs to the synaptophysin/synaptobrevin family. As to quaternary structure, homohexamer or homotetramer. Interacts with SRCIN1. Interacts with VAMP2; the interaction is inhibited by interaction of VAPM2 with SEPT8. Post-translationally, ubiquitinated; mediated by SIAH1 or SIAH2 and leading to its subsequent proteasomal degradation. In terms of processing, phosphorylated by SRC. In terms of tissue distribution, expressed in the brain with expression in the cerebrum and the cerebellum.

It is found in the cytoplasmic vesicle. It localises to the secretory vesicle. The protein localises to the synaptic vesicle membrane. The protein resides in the synapse. Its subcellular location is the synaptosome. In terms of biological role, possibly involved in structural functions as organizing other membrane components or in targeting the vesicles to the plasma membrane. Involved in the regulation of short-term and long-term synaptic plasticity. This Rattus norvegicus (Rat) protein is Synaptophysin (Syp).